The chain runs to 559 residues: MNHLGNVKYLVIVFLIFFDLFLVNGRDVQNNIVDEIKYSEEVCNDQVDLYLLMDCSGSIRRHNWVNHAVPLAMKLIQQLNLNDNAIHLYVNVFSNNAKEIIRLHSDASKNKEKALIIIRSLLSTNLPYGRTNLTDALLQVRKHLNDRINRENANQLVVILTDGIPDSIQDSLKESRKLSDRGVKIAVFGIGQGINVAFNRFLVGCHPSDGKCNLYADSAWENVKNVIGPFMKAVCVEVEKTASCGVWDEWSPCSVTCGKGTRSRKREILHEGCTSEIQEQCEEERCPPKWEPLDVPDEPEDDQPRPRGDNSSVQKPEENIIDNNPQEPSPNPEEGKDENPNGFDLDENPENPPNPDIPEQKPNIPEDSEKEVPSDVPKNPEDDREENFDIPKKPENKHDNQNNLPNDKSDRNIPYSPLPPKVLDNERKQSDPQSQDNNGNRHVPNSEDRETRPHGRNNENRSYNRKYNDTPKHPEREEHEKPDNNKKKGESDNKYKIAGGIAGGLALLACAGLAYKFVVPGAATPYAGEPAPFDETLGEEDKDLDEPEQFRLPEENEWN.

The N-terminal stretch at 1–25 (MNHLGNVKYLVIVFLIFFDLFLVNG) is a signal peptide. The Extracellular portion of the chain corresponds to 26–496 (RDVQNNIVDE…KKGESDNKYK (471 aa)). Residues 48 to 234 (DLYLLMDCSG…NVIGPFMKAV (187 aa)) enclose the VWFA domain. Residues glutamine 77 and glutamine 78 each participate in an isoglutamyl lysine isopeptide (Gln-Lys) (interchain with K-? in Factor 3(A)) cross-link. N-linked (GlcNAc...) asparagine glycosylation occurs at asparagine 132. One can recognise a TSP type-1 domain in the interval 241–287 (TASCGVWDEWSPCSVTCGKGTRSRKREILHEGCTSEIQEQCEEERCP). 3 disulfide bridges follow: cysteine 244–cysteine 273, cysteine 253–cysteine 281, and cysteine 257–cysteine 286. A disordered region spans residues 280–496 (QCEEERCPPK…KKGESDNKYK (217 aa)). Residues 283-292 (EERCPPKWEP) are compositionally biased toward basic and acidic residues. The short motif at 307–309 (RGD) is the Cell attachment site element. N-linked (GlcNAc...) asparagine glycosylation occurs at asparagine 310. Basic and acidic residues predominate over residues 370–400 (KEVPSDVPKNPEDDREENFDIPKKPENKHDN). Polar residues predominate over residues 431–440 (DPQSQDNNGN). Basic and acidic residues predominate over residues 444–459 (PNSEDRETRPHGRNNE). Asparagine 460 carries N-linked (GlcNAc...) asparagine glycosylation. Basic and acidic residues predominate over residues 466–495 (KYNDTPKHPEREEHEKPDNNKKKGESDNKY). A helical membrane pass occupies residues 497 to 515 (IAGGIAGGLALLACAGLAY). Over 516–559 (KFVVPGAATPYAGEPAPFDETLGEEDKDLDEPEQFRLPEENEWN) the chain is Cytoplasmic. The segment at 523–559 (ATPYAGEPAPFDETLGEEDKDLDEPEQFRLPEENEWN) is disordered. The span at 536–547 (TLGEEDKDLDEP) shows a compositional bias: acidic residues. Over residues 548–559 (EQFRLPEENEWN) the composition is skewed to basic and acidic residues.

The protein resides in the cell membrane. This chain is Thrombospondin-related anonymous protein (TRAP), found in Plasmodium falciparum.